A 196-amino-acid chain; its full sequence is Metalloproteinase inhibitor 2 (196 aa).

Positions 1-2 are cleaved as a signal peptide; sequence RA. Cys-3 is a binding site for Zn(2+). Involved in metalloproteinase-binding stretches follow at residues 3-6 and 71-72; these read CSCS and SA. 6 cysteine pairs are disulfide-bonded: Cys-3-Cys-74, Cys-5-Cys-103, Cys-15-Cys-128, Cys-130-Cys-177, Cys-135-Cys-140, and Cys-148-Cys-169. The NTR domain maps to 3–128; the sequence is CSCSPVHPQQ…SLNHRYQMGC (126 aa).

Belongs to the protease inhibitor I35 (TIMP) family. Interacts (via the C-terminal) with MMP2 (via the C-terminal PEX domain); the interaction inhibits the MMP2 activity. Post-translationally, the activity of TIMP2 is dependent on the presence of disulfide bonds.

The protein resides in the secreted. Its function is as follows. Complexes with metalloproteinases (such as collagenases) and irreversibly inactivates them by binding to their catalytic zinc cofactor. The polypeptide is Metalloproteinase inhibitor 2 (TIMP2) (Cricetulus longicaudatus (Long-tailed dwarf hamster)).